The sequence spans 84 residues: Small ribosomal subunit protein bS20 (84 aa).

It belongs to the bacterial ribosomal protein bS20 family.

In terms of biological role, binds directly to 16S ribosomal RNA. The polypeptide is Small ribosomal subunit protein bS20 (Limosilactobacillus fermentum (strain NBRC 3956 / LMG 18251) (Lactobacillus fermentum)).